Consider the following 283-residue polypeptide: Bifunctional protein FolD (283 aa).

NADP(+) is bound by residues 165 to 167, S190, and V231; that span reads GRS.

The protein belongs to the tetrahydrofolate dehydrogenase/cyclohydrolase family. As to quaternary structure, homodimer.

The enzyme catalyses (6R)-5,10-methylene-5,6,7,8-tetrahydrofolate + NADP(+) = (6R)-5,10-methenyltetrahydrofolate + NADPH. It catalyses the reaction (6R)-5,10-methenyltetrahydrofolate + H2O = (6R)-10-formyltetrahydrofolate + H(+). It functions in the pathway one-carbon metabolism; tetrahydrofolate interconversion. Functionally, catalyzes the oxidation of 5,10-methylenetetrahydrofolate to 5,10-methenyltetrahydrofolate and then the hydrolysis of 5,10-methenyltetrahydrofolate to 10-formyltetrahydrofolate. The sequence is that of Bifunctional protein FolD from Bacillus velezensis (strain DSM 23117 / BGSC 10A6 / LMG 26770 / FZB42) (Bacillus amyloliquefaciens subsp. plantarum).